The primary structure comprises 300 residues: Acetaldehyde dehydrogenase 3 (300 aa).

S11–I14 contacts NAD(+). The active-site Acyl-thioester intermediate is the C126. NAD(+) contacts are provided by residues S157 to N165 and N276.

It belongs to the acetaldehyde dehydrogenase family.

The enzyme catalyses acetaldehyde + NAD(+) + CoA = acetyl-CoA + NADH + H(+). This Rhodococcus jostii (strain RHA1) protein is Acetaldehyde dehydrogenase 3 (hsaG).